A 61-amino-acid chain; its full sequence is Large ribosomal subunit protein uL30 (61 aa).

The protein belongs to the universal ribosomal protein uL30 family. In terms of assembly, part of the 50S ribosomal subunit.

In Mycobacterium sp. (strain KMS), this protein is Large ribosomal subunit protein uL30.